The sequence spans 394 residues: Cystathionine gamma-lyase (394 aa).

Positions 37-56 (KQSSPANPIGTYEYSRSQNP) are disordered. Positions 52, 104, and 109 each coordinate substrate. K204 carries the post-translational modification N6-(pyridoxal phosphate)lysine. E334 is a substrate binding site. Residue S362 is modified to Phosphoserine.

The protein belongs to the trans-sulfuration enzymes family. As to quaternary structure, homotetramer. Requires pyridoxal 5'-phosphate as cofactor.

The protein resides in the cytoplasm. The catalysed reaction is L,L-cystathionine + H2O = 2-oxobutanoate + L-cysteine + NH4(+). The protein operates within amino-acid biosynthesis; L-cysteine biosynthesis; L-cysteine from L-homocysteine and L-serine: step 2/2. Functionally, catalyzes the production of cysteine from cystathionine in the reverse transsulfuration pathway for the biosynthesis of sulfur-containing amino acids cysteine and methionine. In this pathway, homocysteine sulfur is converted to cysteine sulfur. Also has cystathionine beta-lyase and cystathionine gamma-synthase activities in vitro. Cystathionine beta-lyase may be physiological, while cystathionine gamma-synthase activity is not, as the required substrate O-succinyl-L-homoserine(OSH) does not occur naturally in S.cerevisiae. The sequence is that of Cystathionine gamma-lyase from Saccharomyces cerevisiae (strain ATCC 204508 / S288c) (Baker's yeast).